The following is a 224-amino-acid chain: GTP-binding protein RHO3 (224 aa).

22-29 (GDGACGKT) provides a ligand contact to GTP. Residues 44-52 (YEPTVFENY) carry the Effector region motif. Residues 69 to 73 (DTAGQ) and 127 to 130 (LKCD) contribute to the GTP site. Positions 205-224 (TPKGARDSAPEAESSSCTIM) are disordered. Residue Cys-221 is modified to Cysteine methyl ester. Cys-221 is lipidated: S-geranylgeranyl cysteine. Residues 222–224 (TIM) constitute a propeptide, removed in mature form.

This sequence belongs to the small GTPase superfamily. Rho family.

The protein localises to the cell membrane. Functionally, involved in the regulation of actin polarization. Rho proteins are required for distinct steps during polarized hyphal growth of A.gossypii. This chain is GTP-binding protein RHO3 (RHO3), found in Eremothecium gossypii (strain ATCC 10895 / CBS 109.51 / FGSC 9923 / NRRL Y-1056) (Yeast).